Here is a 260-residue protein sequence, read N- to C-terminus: tRNA (guanine-N(7)-)-methyltransferase (260 aa).

The tract at residues 1–37 (MIHDPNDAGLPDQLPTPSSEAENSPAGDTTPPEEALH) is disordered. Residues glutamate 90, glutamate 115, aspartate 142, and aspartate 165 each coordinate S-adenosyl-L-methionine. The active site involves aspartate 165. Substrate-binding positions include lysine 169, aspartate 201, and 236–239 (TKFE).

It belongs to the class I-like SAM-binding methyltransferase superfamily. TrmB family.

The enzyme catalyses guanosine(46) in tRNA + S-adenosyl-L-methionine = N(7)-methylguanosine(46) in tRNA + S-adenosyl-L-homocysteine. It participates in tRNA modification; N(7)-methylguanine-tRNA biosynthesis. In terms of biological role, catalyzes the formation of N(7)-methylguanine at position 46 (m7G46) in tRNA. This chain is tRNA (guanine-N(7)-)-methyltransferase, found in Paraburkholderia xenovorans (strain LB400).